The chain runs to 593 residues: Pentatricopeptide repeat-containing protein At5g24830 (593 aa).

PPR repeat units follow at residues 120-154 (CLSI…GVIP), 155-189 (GLIT…GPSP), 190-224 (NCVS…GIRP), 225-256 (NRVT…ILDS), 264-298 (DIVI…NVPA), 299-333 (DSVV…GVNP), 334-368 (DVFT…GVAP), 369-403 (DQIS…SLLP), 404-438 (EVLL…GVKP), 439-473 (NVYT…KIHP), 474-508 (DTTT…GCQP), and 509-543 (DIIT…GITI).

This sequence belongs to the PPR family. P subfamily.

The sequence is that of Pentatricopeptide repeat-containing protein At5g24830 from Arabidopsis thaliana (Mouse-ear cress).